Here is a 312-residue protein sequence, read N- to C-terminus: Tyrosine recombinase XerC (312 aa).

The Core-binding (CB) domain occupies Met1–Ile103. The 183-residue stretch at Glu124–Glu306 folds into the Tyr recombinase domain. Residues Arg164, Lys188, His258, Arg261, and His284 contribute to the active site. Tyr293 acts as the O-(3'-phospho-DNA)-tyrosine intermediate in catalysis.

The protein belongs to the 'phage' integrase family. XerC subfamily. As to quaternary structure, forms a cyclic heterotetrameric complex composed of two molecules of XerC and two molecules of XerD.

Its subcellular location is the cytoplasm. Site-specific tyrosine recombinase, which acts by catalyzing the cutting and rejoining of the recombining DNA molecules. The XerC-XerD complex is essential to convert dimers of the bacterial chromosome into monomers to permit their segregation at cell division. It also contributes to the segregational stability of plasmids. This chain is Tyrosine recombinase XerC, found in Chlamydia caviae (strain ATCC VR-813 / DSM 19441 / 03DC25 / GPIC) (Chlamydophila caviae).